The sequence spans 554 residues: Carboxypeptidase Y homolog A (554 aa).

The N-terminal stretch at 1 to 17 is a signal peptide; it reads MRISASTVLLGAASAAS. A propeptide spanning residues 18–137 is cleaved from the precursor; sequence AASFQNQAQH…QLDNFNLRVK (120 aa). 5 disulfides stabilise this stretch: Cys-191/Cys-431, Cys-325/Cys-339, Cys-349/Cys-372, Cys-356/Cys-365, and Cys-394/Cys-401. Residue Asn-222 is glycosylated (N-linked (GlcNAc...) asparagine). Residue Ser-278 is part of the active site. The active site involves Asp-470. N-linked (GlcNAc...) asparagine glycosylation is present at Asn-518. His-529 is an active-site residue.

The protein belongs to the peptidase S10 family.

It localises to the vacuole. The enzyme catalyses Release of a C-terminal amino acid with broad specificity.. Its function is as follows. Vacuolar carboxypeptidase involved in degradation of small peptides. Digests preferentially peptides containing an aliphatic or hydrophobic residue in P1' position, as well as methionine, leucine or phenylalanine in P1 position of ester substrate. The polypeptide is Carboxypeptidase Y homolog A (cpyA) (Neurospora crassa (strain ATCC 24698 / 74-OR23-1A / CBS 708.71 / DSM 1257 / FGSC 987)).